The following is a 226-amino-acid chain: Apoptosis regulator OPG045 (226 aa).

It belongs to the orthopoxvirus OPG045 family. Homodimer. Interacts with host pro-apoptotic protein BCL2L11 (via BH3 domain). Interacts with host NLRP1. Interacts with host BAK.

The protein localises to the host mitochondrion outer membrane. The protein resides in the host cytoplasm. In terms of biological role, plays a role in evading host innate immune response by inhibiting host inflammasome activation. Interacts with and inhibits NLR-mediated interleukin-1 beta/IL1B production in infected cells. At the host mitochondria outer membrane, interacts with the BH3 domain of host BAK and prevents BAK from binding active BAX. In turn, host apoptosis is inhibited. The chain is Apoptosis regulator OPG045 (OPG045) from Homo sapiens (Human).